The sequence spans 872 residues: Paladin (872 aa).

Residues 1 to 37 are disordered; sequence MGTTASAAQQVPSTVPSSENVQGNGSGSSNVEDRNSL. G2 carries N-myristoyl glycine lipidation. Positions 186-210 form a coiled coil; it reads RRKENLHENLHDLEKGLRAENLELA.

The protein belongs to the paladin family.

It is found in the cytoplasm. The protein localises to the cytosol. The protein is Paladin (pald1) of Xenopus tropicalis (Western clawed frog).